The primary structure comprises 398 residues: Phosphoglycerate kinase (398 aa).

Residues 21 to 23, arginine 36, 59 to 62, arginine 119, and arginine 157 contribute to the substrate site; these read DFN and HLGR. ATP is bound by residues lysine 208, glycine 296, glutamate 327, and 354–357; that span reads GGDS.

This sequence belongs to the phosphoglycerate kinase family. As to quaternary structure, monomer.

It localises to the cytoplasm. It carries out the reaction (2R)-3-phosphoglycerate + ATP = (2R)-3-phospho-glyceroyl phosphate + ADP. It participates in carbohydrate degradation; glycolysis; pyruvate from D-glyceraldehyde 3-phosphate: step 2/5. This Streptococcus agalactiae serotype Ia (strain ATCC 27591 / A909 / CDC SS700) protein is Phosphoglycerate kinase.